A 175-amino-acid chain; its full sequence is Vesicle-associated membrane protein-associated protein SCS22 (175 aa).

The 125-residue stretch at 1–125 folds into the MSP domain; the sequence is MRIVPEKLVF…DDIVFKKIKI (125 aa). The Cytoplasmic portion of the chain corresponds to 1 to 154; it reads MRIVPEKLVF…RAPSAGNGQS (154 aa). The segment at 133–152 is disordered; that stretch reads RKPSGNHDAESARAPSAGNG. A helical; Anchor for type IV membrane protein membrane pass occupies residues 155–175; the sequence is LSSRALLIITVIALLVGWIYY.

Belongs to the VAMP-associated protein (VAP) (TC 9.B.17) family.

It is found in the membrane. Targets proteins containing a FFAT motif to membranes. Involved in regulation of phospholipid metabolism. The sequence is that of Vesicle-associated membrane protein-associated protein SCS22 (SCS22) from Saccharomyces cerevisiae (strain ATCC 204508 / S288c) (Baker's yeast).